Here is a 370-residue protein sequence, read N- to C-terminus: Homoserine O-acetyltransferase (370 aa).

The AB hydrolase-1 domain occupies 44–350; the sequence is NAILVAHAWT…AYGHDAFLLE (307 aa). The active-site Nucleophile is serine 150. Substrate is bound at residue arginine 217. Residues aspartate 311 and histidine 344 contribute to the active site. Position 345 (aspartate 345) interacts with substrate.

Belongs to the AB hydrolase superfamily. MetX family. In terms of assembly, homodimer.

Its subcellular location is the cytoplasm. It carries out the reaction L-homoserine + acetyl-CoA = O-acetyl-L-homoserine + CoA. It participates in amino-acid biosynthesis; L-methionine biosynthesis via de novo pathway; O-acetyl-L-homoserine from L-homoserine: step 1/1. In terms of biological role, transfers an acetyl group from acetyl-CoA to L-homoserine, forming acetyl-L-homoserine. This is Homoserine O-acetyltransferase from Geotalea uraniireducens (strain Rf4) (Geobacter uraniireducens).